The following is a 57-amino-acid chain: UPF0391 membrane protein RPD_2934 (57 aa).

The next 2 helical transmembrane spans lie at tryptophan 6–serine 26 and isoleucine 35–phenylalanine 55.

The protein belongs to the UPF0391 family.

It localises to the cell membrane. The polypeptide is UPF0391 membrane protein RPD_2934 (Rhodopseudomonas palustris (strain BisB5)).